Consider the following 397-residue polypeptide: uncharacterized protein (397 aa).

[4Fe-4S] cluster contacts are provided by C47, C53, C56, and C131. Positions 235, 262, 282, and 328 each coordinate S-adenosyl-L-methionine. C354 serves as the catalytic Nucleophile.

The protein belongs to the class I-like SAM-binding methyltransferase superfamily. RNA M5U methyltransferase family.

This is an uncharacterized protein from Zymomonas mobilis subsp. mobilis (strain ATCC 31821 / ZM4 / CP4).